A 215-amino-acid polypeptide reads, in one-letter code: Protein HP-25 homolog 2 (215 aa).

The first 30 residues, Met1–Ala30, serve as a signal peptide directing secretion. The tract at residues Val35 to Glu79 is disordered. Residues Gly43–Gly76 enclose the Collagen-like domain. Positions Pro45–Leu68 are enriched in pro residues. The region spanning Leu82–Gly215 is the C1q domain.

It is found in the secreted. The polypeptide is Protein HP-25 homolog 2 (Bos taurus (Bovine)).